The chain runs to 241 residues: MAPK phosphothreonine lyase (241 aa).

The active-site Proton donor is His-106. Residue Lys-136 is the Proton acceptor of the active site.

It belongs to the phosphothreonine lyase family.

It is found in the secreted. In terms of biological role, secreted effector that irreversibly inactivates host MAP kinases by catalyzing the dephosphorylation of the phosphothreonine residue in the pT-X-pY motif present in MAPKs, via a beta-elimination reaction leading to a dehydrobutyrine residue. The sequence is that of MAPK phosphothreonine lyase (spvC) from Salmonella choleraesuis (strain SC-B67).